A 541-amino-acid polypeptide reads, in one-letter code: Zinc finger protein 513 (541 aa).

The disordered stretch occupies residues 1-120 (MPRRKQSHPQ…ARGERPGPAC (120 aa)). Residues 44–55 (LEFEEEEEEEEG) are compositionally biased toward acidic residues. Phosphoserine is present on residues Ser85 and Ser96. The segment covering 103–115 (EPARGPGEARGER) has biased composition (basic and acidic residues). 8 consecutive C2H2-type zinc fingers follow at residues 150-172 (YSCR…MQTH), 178-200 (FRCG…TRTH), 206-228 (YRCP…QRTH), 360-382 (FACS…MKTH), 388-410 (FRCA…QRVH), 416-438 (YKCP…GRIH), 444-466 (FRCS…MLRH), and 472-494 (FRCA…QKVH). A disordered region spans residues 492–541 (KVHGHGGAGGPGLSAPEGWAPPHSPPSVLSTRGSAALGATGSRALHTDSP).

It belongs to the krueppel C2H2-type zinc-finger protein family. Binds DNA. Can associate with the proximal promoter regions of PAX6 and SP4, and their known targets including ARR3, RHO, OPN1MW2 and OPN1SW.

The protein resides in the nucleus. Transcriptional regulator that plays a role in retinal development and maintenance. This Rattus norvegicus (Rat) protein is Zinc finger protein 513 (Znf513).